The sequence spans 286 residues: ATP synthase gamma chain (286 aa).

The protein belongs to the ATPase gamma chain family. As to quaternary structure, F-type ATPases have 2 components, CF(1) - the catalytic core - and CF(0) - the membrane proton channel. CF(1) has five subunits: alpha(3), beta(3), gamma(1), delta(1), epsilon(1). CF(0) has three main subunits: a, b and c.

The protein localises to the cell inner membrane. Functionally, produces ATP from ADP in the presence of a proton gradient across the membrane. The gamma chain is believed to be important in regulating ATPase activity and the flow of protons through the CF(0) complex. This chain is ATP synthase gamma chain, found in Flavobacterium johnsoniae (strain ATCC 17061 / DSM 2064 / JCM 8514 / BCRC 14874 / CCUG 350202 / NBRC 14942 / NCIMB 11054 / UW101) (Cytophaga johnsonae).